We begin with the raw amino-acid sequence, 388 residues long: GTPase Obg (388 aa).

In terms of domain architecture, Obg spans 4–162 (SNFVDYVKIY…MTVIMELKLL (159 aa)). An OBG-type G domain is found at 163 to 329 (ADVGLVGFPN…LKDILWEELN (167 aa)). Residues 169-176 (GFPNAGKS), 194-198 (FTTLE), 216-219 (DIPG), 283-286 (TKSD), and 310-312 (SSV) contribute to the GTP site. 2 residues coordinate Mg(2+): Ser-176 and Thr-196. Positions 352-388 (LKDMGEDEELDYEYEEDADDEDDDLDYEYEEEDWEEK) are disordered. Residues 356–388 (GEDEELDYEYEEDADDEDDDLDYEYEEEDWEEK) are compositionally biased toward acidic residues.

It belongs to the TRAFAC class OBG-HflX-like GTPase superfamily. OBG GTPase family. As to quaternary structure, monomer. Requires Mg(2+) as cofactor.

The protein localises to the cytoplasm. An essential GTPase which binds GTP, GDP and possibly (p)ppGpp with moderate affinity, with high nucleotide exchange rates and a fairly low GTP hydrolysis rate. Plays a role in control of the cell cycle, stress response, ribosome biogenesis and in those bacteria that undergo differentiation, in morphogenesis control. The chain is GTPase Obg from Bacteroides thetaiotaomicron (strain ATCC 29148 / DSM 2079 / JCM 5827 / CCUG 10774 / NCTC 10582 / VPI-5482 / E50).